The primary structure comprises 394 residues: 1-deoxy-D-xylulose 5-phosphate reductoisomerase (394 aa).

Residues Thr-12, Gly-13, Ser-14, Ile-15, Gly-38, Asn-41, and Asn-132 each coordinate NADPH. A 1-deoxy-D-xylulose 5-phosphate-binding site is contributed by Lys-133. Glu-134 provides a ligand contact to NADPH. Asp-156 lines the Mn(2+) pocket. Residues Ser-157, Glu-158, Ser-182, and His-205 each contribute to the 1-deoxy-D-xylulose 5-phosphate site. Glu-158 is a Mn(2+) binding site. Residue Gly-211 participates in NADPH binding. 1-deoxy-D-xylulose 5-phosphate is bound by residues Ser-218, Asn-223, Lys-224, and Glu-227. Glu-227 serves as a coordination point for Mn(2+).

Belongs to the DXR family. Mg(2+) serves as cofactor. The cofactor is Mn(2+).

It carries out the reaction 2-C-methyl-D-erythritol 4-phosphate + NADP(+) = 1-deoxy-D-xylulose 5-phosphate + NADPH + H(+). It participates in isoprenoid biosynthesis; isopentenyl diphosphate biosynthesis via DXP pathway; isopentenyl diphosphate from 1-deoxy-D-xylulose 5-phosphate: step 1/6. In terms of biological role, catalyzes the NADPH-dependent rearrangement and reduction of 1-deoxy-D-xylulose-5-phosphate (DXP) to 2-C-methyl-D-erythritol 4-phosphate (MEP). This is 1-deoxy-D-xylulose 5-phosphate reductoisomerase from Pseudarthrobacter chlorophenolicus (strain ATCC 700700 / DSM 12829 / CIP 107037 / JCM 12360 / KCTC 9906 / NCIMB 13794 / A6) (Arthrobacter chlorophenolicus).